Here is a 158-residue protein sequence, read N- to C-terminus: Cyclic pyranopterin monophosphate synthase (158 aa).

Substrate is bound by residues 76–78 and 114–115; these read MCH and ME. Aspartate 129 is a catalytic residue.

This sequence belongs to the MoaC family. As to quaternary structure, homohexamer; trimer of dimers.

It carries out the reaction (8S)-3',8-cyclo-7,8-dihydroguanosine 5'-triphosphate = cyclic pyranopterin phosphate + diphosphate. It functions in the pathway cofactor biosynthesis; molybdopterin biosynthesis. Functionally, catalyzes the conversion of (8S)-3',8-cyclo-7,8-dihydroguanosine 5'-triphosphate to cyclic pyranopterin monophosphate (cPMP). The sequence is that of Cyclic pyranopterin monophosphate synthase from Clostridium perfringens (strain SM101 / Type A).